An 865-amino-acid polypeptide reads, in one-letter code: Catenin alpha-2 (865 aa).

The span at 823–839 (PEKKPLVKREKPEECQT) shows a compositional bias: basic and acidic residues. The segment at 823-851 (PEKKPLVKREKPEECQTRVRRGSQKKHIS) is disordered. Residues 840–850 (RVRRGSQKKHI) show a composition bias toward basic residues.

Belongs to the vinculin/alpha-catenin family.

The protein resides in the cell membrane. It localises to the cytoplasm. Its subcellular location is the cytoskeleton. The protein localises to the cell junction. It is found in the adherens junction. The protein resides in the cell projection. It localises to the axon. Its subcellular location is the nucleus. Functionally, may function as a linker between cadherin adhesion receptors and the cytoskeleton to regulate cell-cell adhesion and differentiation in the nervous system. This is Catenin alpha-2 (Ctnna2) from Danio rerio (Zebrafish).